Here is a 205-residue protein sequence, read N- to C-terminus: dITP/XTP pyrophosphatase (205 aa).

Substrate is bound at residue 11–16 (TKNMGK). Residues Glu-44 and Asp-73 each coordinate Mg(2+). The active-site Proton acceptor is the Asp-73. Residues Ser-74, 158-161 (FGYD), Lys-181, and 186-187 (HR) contribute to the substrate site.

Belongs to the HAM1 NTPase family. In terms of assembly, homodimer. Mg(2+) is required as a cofactor.

It carries out the reaction XTP + H2O = XMP + diphosphate + H(+). The catalysed reaction is dITP + H2O = dIMP + diphosphate + H(+). It catalyses the reaction ITP + H2O = IMP + diphosphate + H(+). Functionally, pyrophosphatase that catalyzes the hydrolysis of nucleoside triphosphates to their monophosphate derivatives, with a high preference for the non-canonical purine nucleotides XTP (xanthosine triphosphate), dITP (deoxyinosine triphosphate) and ITP. Seems to function as a house-cleaning enzyme that removes non-canonical purine nucleotides from the nucleotide pool, thus preventing their incorporation into DNA/RNA and avoiding chromosomal lesions. This Bacillus thuringiensis subsp. konkukian (strain 97-27) protein is dITP/XTP pyrophosphatase.